The primary structure comprises 809 residues: Hydrazine synthase subunit alpha (809 aa).

The N-terminal stretch at 1–27 (MGKRKLGVIASAFVAGALVCGSTLVNA) is a signal peptide. Position 303 (Cys-303) interacts with Zn(2+). The heme site is built by Cys-583 and Cys-586. His-587 contacts Zn(2+). Tyr-591, Cys-685, Cys-688, His-689, and His-772 together coordinate heme. The Cytochrome c domain occupies 633–792 (KGVKHGEDVV…AIVEWIDLGA (160 aa)).

Part of the hydrazine synthase complex that forms an elongated dimer of heterotrimers composed of one alpha, one beta and one gamma subunit. Heme c serves as cofactor.

It localises to the anammoxosome. The enzyme catalyses hydrazine + 3 Fe(III)-[cytochrome c] + H2O = nitric oxide + 3 Fe(II)-[cytochrome c] + NH4(+) + 2 H(+). The protein operates within nitrogen metabolism. Component of the hydrazine synthase complex that catalyzes the condensation of nitric oxide (NO) with ammonium to form hydrazine. The alpha subunit catalyzes the second half-reaction, i.e. the condensation of hydroxylamine formed in the active site of the gamma subunit with ammonia, yielding hydrazine. Is involved in anaerobic ammonium oxidation (anammox), a biological process in which nitrite is used as the electron acceptor in the conversion of ammonium to dinitrogen gas (N2) and water; this bacterial process has a major role in the Earth's nitrogen cycle and has been estimated to synthesize up to 50% of the dinitrogen gas emitted into our atmosphere from the oceans. In Kuenenia stuttgartiensis, this protein is Hydrazine synthase subunit alpha.